A 438-amino-acid polypeptide reads, in one-letter code: MSQANAATKASSDVFFNASLEDIDPEIFGAIRNELGRQRHEIGLIASENIVSRAVLEAQGSILTNKYAEGYPGKRYYGGGQYVDVVEELAIERAKKLFGAEFANVQPNSGSQMNQAVFLALLQPGDTFMGLDLNSGGHLTHGSPVNMSGKWFNVVSYGVRKDDHLLDMDEVARLARENKPKLILAGGTAYSRIWDWKRFREIADEVGAYLMVDMAHIAGLVAGGQHPSPVPHAHVCTTTTHKSLRGPRGGMILTNDADIAKKINSAVFPGLQGGPLMHVIAGKAVAFAEALKPEFKLYAKNVVDNARALAEELKSHGLDIVSGGTDNHLMLVDLRPKNATGKRAEAALGRANITCNKNGIPFDPEKPFVTSGVRLGTPAGTTRGFGVAEFKEIGSLIAEVLDGLKVANSDEGNAAVEQAVKEKVIALTGRFPMYGYQG.

(6S)-5,6,7,8-tetrahydrofolate-binding positions include L133 and G137–L139. An N6-(pyridoxal phosphate)lysine modification is found at K242.

This sequence belongs to the SHMT family. Homodimer. Pyridoxal 5'-phosphate serves as cofactor.

Its subcellular location is the cytoplasm. The enzyme catalyses (6R)-5,10-methylene-5,6,7,8-tetrahydrofolate + glycine + H2O = (6S)-5,6,7,8-tetrahydrofolate + L-serine. It participates in one-carbon metabolism; tetrahydrofolate interconversion. Its pathway is amino-acid biosynthesis; glycine biosynthesis; glycine from L-serine: step 1/1. In terms of biological role, catalyzes the reversible interconversion of serine and glycine with tetrahydrofolate (THF) serving as the one-carbon carrier. This reaction serves as the major source of one-carbon groups required for the biosynthesis of purines, thymidylate, methionine, and other important biomolecules. Also exhibits THF-independent aldolase activity toward beta-hydroxyamino acids, producing glycine and aldehydes, via a retro-aldol mechanism. The polypeptide is Serine hydroxymethyltransferase (Brucella suis (strain ATCC 23445 / NCTC 10510)).